The chain runs to 180 residues: 3-hydroxyanthranilate 3,4-dioxygenase (180 aa).

R46 lines the O2 pocket. 3 residues coordinate Fe cation: H50, E56, and H94. Position 56 (E56) interacts with substrate. R98 and E109 together coordinate substrate. 4 residues coordinate Fe cation: C124, C127, C161, and C164.

It belongs to the 3-HAO family. As to quaternary structure, homodimer. The cofactor is Fe(2+).

The catalysed reaction is 3-hydroxyanthranilate + O2 = (2Z,4Z)-2-amino-3-carboxymuconate 6-semialdehyde. The protein operates within cofactor biosynthesis; NAD(+) biosynthesis; quinolinate from L-kynurenine: step 3/3. Its function is as follows. Catalyzes the oxidative ring opening of 3-hydroxyanthranilate to 2-amino-3-carboxymuconate semialdehyde, which spontaneously cyclizes to quinolinate. This chain is 3-hydroxyanthranilate 3,4-dioxygenase, found in Ruegeria pomeroyi (strain ATCC 700808 / DSM 15171 / DSS-3) (Silicibacter pomeroyi).